Reading from the N-terminus, the 103-residue chain is Small ribosomal subunit protein uS10 (103 aa).

Belongs to the universal ribosomal protein uS10 family. As to quaternary structure, part of the 30S ribosomal subunit.

Its function is as follows. Involved in the binding of tRNA to the ribosomes. In Mycoplasmopsis pulmonis (strain UAB CTIP) (Mycoplasma pulmonis), this protein is Small ribosomal subunit protein uS10.